The following is a 214-amino-acid chain: Cytochrome b (214 aa).

4 helical membrane passes run Phe31–Ile51, Trp75–Ile96, Trp111–Leu131, and Phe176–Ile196. 2 residues coordinate heme b: His81 and His95. Residues His180 and His194 each coordinate heme b. His199 contributes to the a ubiquinone binding site.

The protein belongs to the cytochrome b family. The cytochrome bc1 complex contains 3 respiratory subunits (MT-CYB, CYC1 and UQCRFS1), 2 core proteins (UQCRC1 and UQCRC2) and probably 6 low-molecular weight proteins. Heme b serves as cofactor.

It localises to the mitochondrion inner membrane. In terms of biological role, component of the ubiquinol-cytochrome c reductase complex (complex III or cytochrome b-c1 complex) that is part of the mitochondrial respiratory chain. The b-c1 complex mediates electron transfer from ubiquinol to cytochrome c. Contributes to the generation of a proton gradient across the mitochondrial membrane that is then used for ATP synthesis. The chain is Cytochrome b (MT-CYB) from Cerastes cerastes (Horned desert viper).